The chain runs to 403 residues: MTQDWDAGRLDSDLEGAAFDTLAVRAGQRRTPEGEHGEALFTTSSYVFRTAADAAARFAGEVPGNVYSRYTNPTVRTFEERIAALEGAEQAVATASGMSAILALVMSLCSSGDHVLVSRSVFGSTISLFDKYFKRFGIQVDYPPLSDLAAWEAACKPNTKLFFVESPSNPLAELVDIAALAEIAHAKGALLAVDNCFCTPALQQPLKLGADVVIHSATKYIDGQGRGMGGVVAGRGEQMKEVVGFLRTAGPTLSPFNAWLFLKGLETLRIRMQAHSASALALAEWLERQPGIERVYYAGLPSHPQHELARRQQSGFGAVVSFDVKGGRDAAWRFIDATRMVSITTNLGDTKTTIAHPATTSHGRLSPEDRARAGIGDSLIRVAVGLEDLDDLKADMARGLAAL.

An N6-(pyridoxal phosphate)lysine modification is found at Lys219.

Belongs to the trans-sulfuration enzymes family. MetZ subfamily. In terms of assembly, homotetramer. Pyridoxal 5'-phosphate serves as cofactor.

The catalysed reaction is O-succinyl-L-homoserine + hydrogen sulfide = L-homocysteine + succinate. Its pathway is amino-acid biosynthesis; L-methionine biosynthesis via de novo pathway; L-homocysteine from O-succinyl-L-homoserine: step 1/1. Catalyzes the formation of L-homocysteine from O-succinyl-L-homoserine (OSHS) and hydrogen sulfide. Cannot use the other activated form of L-homoserine, O-acetyl-L-homoserine, as a substrate. This chain is O-succinylhomoserine sulfhydrylase, found in Pseudomonas aeruginosa (strain ATCC 15692 / DSM 22644 / CIP 104116 / JCM 14847 / LMG 12228 / 1C / PRS 101 / PAO1).